Here is a 267-residue protein sequence, read N- to C-terminus: Chlorophyll a-b binding protein 3B, chloroplastic (267 aa).

A chloroplast-targeting transit peptide spans 1–34 (MAASTMALSSSTFAGKAVKLSPSSSEISGNGRIT). Residues 19 to 52 (KLSPSSSEISGNGRITMRKTAAKPKPASSGSPWX) are disordered. Residues 153-173 (LVHAQSILAIWACQVVLMGAV) form a helical membrane-spanning segment. Chlorophyll b-binding residues include Val-154, Ser-158, Gln-166, Glu-174, Arg-177, and Leu-183. Chlorophyll a contacts are provided by Lys-214, Glu-215, Asn-218, Arg-220, Gln-232, His-247, and Ala-256. Residues 221–241 (LAMFSMFGFFVQAIVTGKGPL) form a helical membrane-spanning segment. A chlorophyll b-binding site is contributed by Phe-263.

The protein belongs to the light-harvesting chlorophyll a/b-binding (LHC) protein family. In terms of assembly, the LHC complex consists of chlorophyll a-b binding proteins. The cofactor is Binds at least 14 chlorophylls (8 Chl-a and 6 Chl-b) and carotenoids such as lutein and neoxanthin.. Photoregulated by reversible phosphorylation of its threonine residues.

It localises to the plastid. It is found in the chloroplast thylakoid membrane. In terms of biological role, the light-harvesting complex (LHC) functions as a light receptor, it captures and delivers excitation energy to photosystems with which it is closely associated. The chain is Chlorophyll a-b binding protein 3B, chloroplastic (CAB3B) from Solanum lycopersicum (Tomato).